Here is a 336-residue protein sequence, read N- to C-terminus: tRNA N6-adenosine threonylcarbamoyltransferase (336 aa).

Positions 114 and 118 each coordinate Fe cation. Substrate-binding positions include 136-140, Asp169, Gly182, Asp186, and Asn275; that span reads LVSGG. Residue Asp301 participates in Fe cation binding.

Belongs to the KAE1 / TsaD family. The cofactor is Fe(2+).

Its subcellular location is the cytoplasm. It carries out the reaction L-threonylcarbamoyladenylate + adenosine(37) in tRNA = N(6)-L-threonylcarbamoyladenosine(37) in tRNA + AMP + H(+). Its function is as follows. Required for the formation of a threonylcarbamoyl group on adenosine at position 37 (t(6)A37) in tRNAs that read codons beginning with adenine. Is involved in the transfer of the threonylcarbamoyl moiety of threonylcarbamoyl-AMP (TC-AMP) to the N6 group of A37, together with TsaE and TsaB. TsaD likely plays a direct catalytic role in this reaction. This chain is tRNA N6-adenosine threonylcarbamoyltransferase, found in Streptococcus pneumoniae (strain P1031).